Here is a 238-residue protein sequence, read N- to C-terminus: Sugar fermentation stimulation protein homolog (238 aa).

It belongs to the SfsA family.

This is Sugar fermentation stimulation protein homolog from Haemophilus influenzae (strain PittGG).